Consider the following 982-residue polypeptide: Little elongation complex subunit 2 (982 aa).

Phosphoserine occurs at positions 17 and 326. Residues 410 to 427 (TTKVSKSPSPASTSTVPN) are compositionally biased toward polar residues. Disordered stretches follow at residues 410-450 (TTKV…PDIS) and 473-504 (GMDGGPEECKNKDDQGFESCEKVSNSDKPLIQ). Over residues 479–497 (EECKNKDDQGFESCEKVSN) the composition is skewed to basic and acidic residues. S571 is subject to Phosphoserine. T573 is subject to Phosphothreonine. Disordered stretches follow at residues 595 to 623 (VGSNLSSRPASPNSSSGQASVGNQTNTAC), 672 to 697 (ENSKQPSVSEQLSGPSDSSSWPKSGW), and 930 to 982 (PKSL…RKIT). The segment covering 597 to 610 (SNLSSRPASPNSSS) has biased composition (low complexity). Composition is skewed to polar residues over residues 611 to 623 (GQASVGNQTNTAC) and 672 to 683 (ENSKQPSVSEQL). The span at 684–697 (SGPSDSSSWPKSGW) shows a compositional bias: low complexity. The span at 956 to 970 (SMETKSSCLPAQQVE) shows a compositional bias: polar residues.

Belongs to the ICE2 family. In terms of assembly, component of the little elongation complex (LEC), at least composed of ELL (ELL, ELL2 or ELL3), ZC3H8, ICE1 and ICE2. Interacts with ICE1 (via C-terminus domain). Interacts with ELL. Expressed at low levels in lung and testis.

The protein resides in the nucleus. Its function is as follows. Component of the little elongation complex (LEC), a complex required to regulate small nuclear RNA (snRNA) gene transcription by RNA polymerase II and III. The protein is Little elongation complex subunit 2 (ICE2) of Homo sapiens (Human).